The primary structure comprises 429 residues: Phosphoribosylamine--glycine ligase (429 aa).

The ATP-grasp domain maps to 109–316; that stretch reads KDFLARHKIP…LVELCLKACD (208 aa). Residue 135–196 participates in ATP binding; it reads LREKGTPIVV…EEFLDGEEAS (62 aa). Residues Glu-286 and Asn-288 each coordinate Mg(2+).

Belongs to the GARS family. Mg(2+) is required as a cofactor. Requires Mn(2+) as cofactor.

It catalyses the reaction 5-phospho-beta-D-ribosylamine + glycine + ATP = N(1)-(5-phospho-beta-D-ribosyl)glycinamide + ADP + phosphate + H(+). Its pathway is purine metabolism; IMP biosynthesis via de novo pathway; N(1)-(5-phospho-D-ribosyl)glycinamide from 5-phospho-alpha-D-ribose 1-diphosphate: step 2/2. This is Phosphoribosylamine--glycine ligase from Haemophilus influenzae (strain ATCC 51907 / DSM 11121 / KW20 / Rd).